Here is a 333-residue protein sequence, read N- to C-terminus: uncharacterized protein (333 aa).

An N-terminal signal peptide occupies residues 1–16; the sequence is MRPFLMILSVTYIASA. N-linked (GlcNAc...) asparagine glycosylation is present at Asn-204.

This is an uncharacterized protein from Encephalitozoon cuniculi (strain GB-M1) (Microsporidian parasite).